We begin with the raw amino-acid sequence, 817 residues long: Two pore calcium channel protein 1 (817 aa).

Residues 1–101 are Cytoplasmic-facing; that stretch reads MSVILDDDVL…PKDARALAAY (101 aa). The tract at residues 22–66 is disordered; that stretch reads PLTPSNGLGQEDLPSKNGGGQSGPNSQVPSLVSGADSPPSSPPGH. A helical transmembrane segment spans residues 102–122; it reads LFVHNHFFYMMELLTALLLLL. The Extracellular portion of the chain corresponds to 123–137; sequence LSLCESPAVPALKLR. Residues 138–158 form a helical membrane-spanning segment; the sequence is TYVHATLELFALMVVVFELCM. Over 159-172 the chain is Cytoplasmic; it reads KLRWLGFHTFVRHK. A helical membrane pass occupies residues 173–193; that stretch reads RTMVKTSVLVVQFIEAIVVLV. The Extracellular portion of the chain corresponds to 194–202; the sequence is RQTSHVRVT. The helical transmembrane segment at 203–221 threads the bilayer; the sequence is RALRCIFLVDCRYCGGVRR. At 222 to 235 the chain is on the cytoplasmic side; that stretch reads NLRQIFQSLPPFMD. A helical membrane pass occupies residues 236 to 256; that stretch reads ILLLLLFFMIIFAILGFYLFS. Over 257 to 263 the chain is Extracellular; it reads TNPSDPY. The helical; Pore-forming intramembrane region spans 264-287; that stretch reads FNTLENSIVNLFVLLTTANFPDVM. Over 288 to 298 the chain is Extracellular; sequence MPSYSRNPWSC. Residues 299 to 319 traverse the membrane as a helical segment; the sequence is VFFIVYLSIELYFIMNLLLAV. The Cytoplasmic segment spans residues 320–445; that stretch reads VFDTFNDIEK…NILVNSKAFQ (126 aa). Residues 446–466 form a helical membrane-spanning segment; the sequence is YFMYLVVAVNGVWILVETFML. Over 467–480 the chain is Extracellular; the sequence is KGGNFISKHVPWSY. Residues 481–501 form a helical membrane-spanning segment; sequence LVFLTIYGVELFMKVAGLGPV. Residues 502 to 504 lie on the Cytoplasmic side of the membrane; it reads EYL. A helical transmembrane segment spans residues 505 to 527; it reads SSGWNLFDFSVTAFAFLGLLALT. At 528–535 the chain is on the extracellular side; the sequence is LNMEPFYF. The helical transmembrane segment at 536–550 threads the bilayer; the sequence is IVVLRPLQLLRLFKL. Over 551–574 the chain is Cytoplasmic; it reads KKRYRNVLDTMFELLPRMASLGLT. Residues 575–595 traverse the membrane as a helical segment; that stretch reads LLTFYYSFAIVGMEFFSGRLS. Over 596 to 630 the chain is Extracellular; it reads PNCCNSSTVADAYRFINHTVGNKTKVEEGYYYLNN. The segment at residues 631-654 is an intramembrane region (helical; Pore-forming); it reads FDNILNSFVTLFELTVVNNWYIIM. Residues 655–671 lie on the Extracellular side of the membrane; the sequence is EGVTSQTSHWSRLYFMT. Residues 672 to 692 traverse the membrane as a helical segment; sequence FYIVTMVVMTIIVAFILEAFV. The Cytoplasmic segment spans residues 693-817; sequence FRMNYSRKSQ…GSRQRSQTVT (125 aa). The stretch at 770 to 794 forms a coiled coil; that stretch reads SLKMYQEEIQEWYEEHAREQEQQQL. The interval 785-817 is disordered; the sequence is HAREQEQQQLRGSAPSPAAQQTPGSRQRSQTVT. Positions 802–817 are enriched in polar residues; sequence AAQQTPGSRQRSQTVT.

This sequence belongs to the calcium channel alpha-1 subunit (TC 1.A.1.11) family. Two pore calcium channel subfamily. In terms of assembly, dimer. Interacts with MTOR; the interaction is required for TPCN1 ATP sensitivity. Interacts with STX7, STX8 and STX12. Interacts with JPT2. Found in a complex with LSM12, TPCN1 and TPCN2. In terms of processing, N-glycosylated. In terms of tissue distribution, widely expressed. Expressed at relatively high level in kidney, liver and lung, and in the kidney it is expressed at inner medullary collecting ducts.

The protein localises to the lysosome membrane. It localises to the endosome membrane. The protein resides in the early endosome membrane. Its subcellular location is the recycling endosome membrane. The catalysed reaction is Na(+)(in) = Na(+)(out). It catalyses the reaction Ca(2+)(in) = Ca(2+)(out). Its activity is regulated as follows. Na(+) current is inhibited by ATP in a MTORC-dependent manner. ATP sensitivity is independent of PI(3,5)P2. Probably regulated by Mg(2+) ions, cytosolic Mg(2+) selectively inhibits outward current while lysosomal Mg(2+) modestly inhibits both the outward and inward currents. In the absence of Mg(2+), NAADP readily activates TPCN2, with properties similar to PI(3,5)P2. Both current elicited by PI(3,5)P2 as well as NAADP are inhibited by tetrandrine. Its function is as follows. Intracellular channel initially characterized as a non-selective Ca(2+)-permeable channel activated by NAADP (nicotinic acid adenine dinucleotide phosphate), it is also a voltage-gated highly-selective Na(+) channel activated directly by PI(3,5)P2 (phosphatidylinositol 3,5-bisphosphate) that senses pH changes and confers electrical excitability to organelles. Localizes to the early and recycling endosomes membranes where it plays a role in the uptake and processing of proteins and regulates organellar membrane excitability, membrane trafficking and pH homeostasis. Ion selectivity is not fixed but rather agonist-dependent and under defined ionic conditions, can be readily activated by both NAADP and PI(3,5)P2. Required for mTOR-dependent nutrient sensing. This chain is Two pore calcium channel protein 1 (Tpcn1), found in Rattus norvegicus (Rat).